The chain runs to 156 residues: Small ribosomal subunit protein uS7 (156 aa).

The protein belongs to the universal ribosomal protein uS7 family. As to quaternary structure, part of the 30S ribosomal subunit. Contacts proteins S9 and S11.

In terms of biological role, one of the primary rRNA binding proteins, it binds directly to 16S rRNA where it nucleates assembly of the head domain of the 30S subunit. Is located at the subunit interface close to the decoding center, probably blocks exit of the E-site tRNA. This Maricaulis maris (strain MCS10) (Caulobacter maris) protein is Small ribosomal subunit protein uS7.